We begin with the raw amino-acid sequence, 311 residues long: Aspartate carbamoyltransferase catalytic subunit (311 aa).

Arg-59 and Thr-60 together coordinate carbamoyl phosphate. Position 87 (Lys-87) interacts with L-aspartate. Residues Arg-109, His-139, and Gln-142 each contribute to the carbamoyl phosphate site. Residues Arg-172 and Arg-224 each contribute to the L-aspartate site. Residues Ala-265 and Pro-266 each contribute to the carbamoyl phosphate site.

It belongs to the aspartate/ornithine carbamoyltransferase superfamily. ATCase family. In terms of assembly, heterododecamer (2C3:3R2) of six catalytic PyrB chains organized as two trimers (C3), and six regulatory PyrI chains organized as three dimers (R2).

It catalyses the reaction carbamoyl phosphate + L-aspartate = N-carbamoyl-L-aspartate + phosphate + H(+). It functions in the pathway pyrimidine metabolism; UMP biosynthesis via de novo pathway; (S)-dihydroorotate from bicarbonate: step 2/3. In terms of biological role, catalyzes the condensation of carbamoyl phosphate and aspartate to form carbamoyl aspartate and inorganic phosphate, the committed step in the de novo pyrimidine nucleotide biosynthesis pathway. This chain is Aspartate carbamoyltransferase catalytic subunit, found in Streptococcus equi subsp. zooepidemicus (strain MGCS10565).